Here is a 461-residue protein sequence, read N- to C-terminus: Photosystem II CP43 reaction center protein (461 aa).

A propeptide spanning residues 1–2 (ME) is cleaved from the precursor. The residue at position 3 (T3) is an N-acetylthreonine. Position 3 is a phosphothreonine (T3). Transmembrane regions (helical) follow at residues 57 to 81 (LFEV…PHIA), 122 to 143 (LIGP…KDKN), 166 to 188 (KAMY…RVIT), 243 to 263 (TPWP…LSYS), and 279 to 300 (WFNN…ASQS). E355 contributes to the [CaMn4O5] cluster binding site. The helical transmembrane segment at 435-459 (RARAAAAGFEKGIDRFDEPVLSMRP) threads the bilayer.

The protein belongs to the PsbB/PsbC family. PsbC subfamily. PSII is composed of 1 copy each of membrane proteins PsbA, PsbB, PsbC, PsbD, PsbE, PsbF, PsbH, PsbI, PsbJ, PsbK, PsbL, PsbM, PsbT, PsbX, PsbY, PsbZ, Psb30/Ycf12, at least 3 peripheral proteins of the oxygen-evolving complex and a large number of cofactors. It forms dimeric complexes. Binds multiple chlorophylls and provides some of the ligands for the Ca-4Mn-5O cluster of the oxygen-evolving complex. It may also provide a ligand for a Cl- that is required for oxygen evolution. PSII binds additional chlorophylls, carotenoids and specific lipids. is required as a cofactor. In terms of processing, phosphorylated in vitro.

Its subcellular location is the plastid. The protein localises to the chloroplast thylakoid membrane. Its function is as follows. One of the components of the core complex of photosystem II (PSII). It binds chlorophyll and helps catalyze the primary light-induced photochemical processes of PSII. PSII is a light-driven water:plastoquinone oxidoreductase, using light energy to abstract electrons from H(2)O, generating O(2) and a proton gradient subsequently used for ATP formation. The chain is Photosystem II CP43 reaction center protein from Chlamydomonas reinhardtii (Chlamydomonas smithii).